The following is a 103-amino-acid chain: Co-chaperonin GroES (103 aa).

Belongs to the GroES chaperonin family. Heptamer of 7 subunits arranged in a ring. Interacts with the chaperonin GroEL.

It is found in the cytoplasm. In terms of biological role, together with the chaperonin GroEL, plays an essential role in assisting protein folding. The GroEL-GroES system forms a nano-cage that allows encapsulation of the non-native substrate proteins and provides a physical environment optimized to promote and accelerate protein folding. GroES binds to the apical surface of the GroEL ring, thereby capping the opening of the GroEL channel. The polypeptide is Co-chaperonin GroES (Thermosynechococcus vestitus (strain NIES-2133 / IAM M-273 / BP-1)).